A 173-amino-acid polypeptide reads, in one-letter code: Alkyl hydroperoxide reductase AhpD (173 aa).

Cysteine 131 serves as the catalytic Proton donor. A disulfide bond links cysteine 131 and cysteine 134. The active-site Cysteine sulfenic acid (-SOH) intermediate is cysteine 134.

This sequence belongs to the AhpD family.

It catalyses the reaction N(6)-[(R)-dihydrolipoyl]-L-lysyl-[lipoyl-carrier protein] + a hydroperoxide = N(6)-[(R)-lipoyl]-L-lysyl-[lipoyl-carrier protein] + an alcohol + H2O. In terms of biological role, antioxidant protein with alkyl hydroperoxidase activity. Required for the reduction of the AhpC active site cysteine residues and for the regeneration of the AhpC enzyme activity. In Maricaulis maris (strain MCS10) (Caulobacter maris), this protein is Alkyl hydroperoxide reductase AhpD.